Here is a 306-residue protein sequence, read N- to C-terminus: D-alanine--D-alanine ligase (306 aa).

The ATP-grasp domain maps to 101–303 (KLVWQALGLP…FSQLVARILM (203 aa)). An ATP-binding site is contributed by 134–189 (VAKLGLPLIVKPSHEGSSVGMSKVDHASELQKALVEAFQHDSDVLIEKWLSGPEFT). Positions 257, 270, and 272 each coordinate Mg(2+).

This sequence belongs to the D-alanine--D-alanine ligase family. The cofactor is Mg(2+). Mn(2+) serves as cofactor.

The protein localises to the cytoplasm. It carries out the reaction 2 D-alanine + ATP = D-alanyl-D-alanine + ADP + phosphate + H(+). It functions in the pathway cell wall biogenesis; peptidoglycan biosynthesis. In terms of biological role, cell wall formation. This is D-alanine--D-alanine ligase from Yersinia pseudotuberculosis serotype O:1b (strain IP 31758).